Reading from the N-terminus, the 243-residue chain is Ion-translocating oxidoreductase complex subunit E (243 aa).

6 consecutive transmembrane segments (helical) span residues 40-60 (LGMGLATTVVLILSNVVISAL), 72-92 (AFILIIAAIVTVVDLALNAWL), 94-114 (DLHKVLGLFIALIVTNCAILG), 129-149 (ALDGLMMGIGFTLALVVVGAI), 152-172 (ILGSGTLFAQASLLLGPHFAF), and 183-203 (GFLIMILPPGGFLVVGGLFAL).

The protein belongs to the NqrDE/RnfAE family. As to quaternary structure, the complex is composed of six subunits: RnfA, RnfB, RnfC, RnfD, RnfE and RnfG.

The protein localises to the cellular chromatophore membrane. Its function is as follows. Part of a membrane-bound complex that couples electron transfer with translocation of ions across the membrane. Required for nitrogen fixation. Involved in electron transfer to nitrogenase. The sequence is that of Ion-translocating oxidoreductase complex subunit E from Rhodobacter capsulatus (Rhodopseudomonas capsulata).